We begin with the raw amino-acid sequence, 125 residues long: PEP-dependent dihydroxyacetone kinase 2, phosphoryl donor subunit DhaM (125 aa).

One can recognise a PTS EIIA type-4 domain in the interval Met-1 to His-125. Catalysis depends on His-9, which acts as the Tele-phosphohistidine intermediate.

It belongs to the PEP-utilizing enzyme family. Homodimer. The dihydroxyacetone kinase complex is composed of a homodimer of DhaM, a homodimer of DhaK and the subunit DhaL.

Its subcellular location is the cytoplasm. The catalysed reaction is dihydroxyacetone + phosphoenolpyruvate = dihydroxyacetone phosphate + pyruvate. Functionally, component of the dihydroxyacetone kinase complex, which is responsible for the phosphoenolpyruvate (PEP)-dependent phosphorylation of dihydroxyacetone. DhaM serves as the phosphoryl donor. Is phosphorylated by phosphoenolpyruvate in an EI- and HPr-dependent reaction, and a phosphorelay system on histidine residues finally leads to phosphoryl transfer to DhaL and dihydroxyacetone. This is PEP-dependent dihydroxyacetone kinase 2, phosphoryl donor subunit DhaM from Listeria innocua serovar 6a (strain ATCC BAA-680 / CLIP 11262).